Consider the following 237-residue polypeptide: uncharacterized protein (237 aa).

50-57 (APPGTGKS) lines the ATP pocket.

This is an uncharacterized protein from Escherichia coli (strain K12).